Here is a 556-residue protein sequence, read N- to C-terminus: MKTDIEIAQSVALKPIAEIVEQVGIGFDDIELYGKYKAKLSFDKIEAVRSQKVGKLILVTAINPTPAGEGKSTMSIGLADALNKIGKKTMIALREPSLGPVMGIKGGAAGGGYAQVLPMEDINLHFTGDMHAITTANNALSALLDNHIHQGNELDIDQRRVIWKRVVDLNDRALRQVIVGLGSSVNGIPREDGFDITVASEIMAILCLATDLSDLKKRLSNIVVAYSRDRKPIYVKDLKIEGALTLILKDAIKPNLVQTIYGTPALVHGGPFANIAHGCNSVLATSTALRLADYVVTEAGFGADLGAEKFLDIKTPNLPTSPDAIVIVATLRALKMHGGVSKEDLSQENVKAVKRGFTNLERHVNNMRQYGVPVVVAINQFTADTESEIATLKTLCSNIDVAVELASVWEDGADGGLELAQTVANVIETQSSNYKRLYNDEDTIEEKIKKIVTKIYGGNKVHFGPKAQIQLKEFSDNGWDKMPICMAKTQYSFSDNPNLLGAPTDFDITVREFVPKTGAGFIVALTGDVLTMPGLPKKPAALNMDVLEDGTAIGLF.

65–72 (TPAGEGKS) contacts ATP.

Belongs to the formate--tetrahydrofolate ligase family.

It carries out the reaction (6S)-5,6,7,8-tetrahydrofolate + formate + ATP = (6R)-10-formyltetrahydrofolate + ADP + phosphate. Its pathway is one-carbon metabolism; tetrahydrofolate interconversion. The polypeptide is Formate--tetrahydrofolate ligase (Streptococcus agalactiae serotype III (strain NEM316)).